The chain runs to 109 residues: Putative double-stranded DNA mimic protein plu2488 (109 aa).

This sequence belongs to the putative dsDNA mimic protein family.

May act as a double-stranded DNA (dsDNA) mimic. Probably regulates the activity of a dsDNA-binding protein. The polypeptide is Putative double-stranded DNA mimic protein plu2488 (Photorhabdus laumondii subsp. laumondii (strain DSM 15139 / CIP 105565 / TT01) (Photorhabdus luminescens subsp. laumondii)).